A 115-amino-acid chain; its full sequence is Con-Ins G1a (115 aa).

A signal peptide spans 1–24 (MTTSSYFLLMALGLLLYVCQSSFG). A propeptide spanning residues 25–29 (NQHTR) is cleaved from the precursor. At Pro-34 the chain carries 4-hydroxyproline; partial. 3 cysteine pairs are disulfide-bonded: Cys-38/Cys-101, Cys-50/Cys-114, and Cys-100/Cys-105. Glu-41 carries the post-translational modification 4-carboxyglutamate. A propeptide spans 53-94 (KRNDAGEKRGRASPLWQRRGSLSKLKARAKRNGAFHLPRDGR) (c peptide). Residue Glu-98 is modified to 4-carboxyglutamate. Position 104 is a 4-hydroxyproline; partial (Pro-104). 4-carboxyglutamate; partial is present on Glu-109. Position 114 is a cysteine amide (Cys-114).

The protein belongs to the insulin family. As to quaternary structure, heterodimer of A and B chains; disulfide-linked. As to expression, expressed by the venom gland.

The protein localises to the secreted. This venom insulin, from a fish-hunting cone snail, facilitates prey capture by rapidly inducing hypoglycemic shock. It is one of the smallest known insulin found in nature and lacks the C-terminal segment of the B chain that, in human insulin, mediates engagement of the insulin receptor (INSR) and assembly of the hormone's hexameric storage form. Despite lacking this segment, it both binds and activates human insulin receptor (long isoform (HIR-B)) with a high potency (EC(50)=16.28 nM). In vivo, intraperitoneal injection of this peptide into zebrafish lowers blood glucose with the same potency than human insulin. In addition, when applied to water, this peptide reduces overall locomotor activity of zebrafish larvae, observed as a significant decrease in the percentage of time spent swimming and movement frequency. When tested on a mouse model of diabetes, this insulin also lowers blood glucose with a 10-fold lower potency than human insulin. The polypeptide is Con-Ins G1a (Conus geographus (Geography cone)).